The sequence spans 575 residues: Putative diflavin flavoprotein A 4 (575 aa).

The zinc metallo-hydrolase stretch occupies residues 41–234; that stretch reads QRGTTANSYL…LGARSYAPGH (194 aa). The 143-residue stretch at 263–405 folds into the Flavodoxin-like domain; it reads VALLYTSAYG…AGATFAQTLK (143 aa). Residues 429-575 form a flavodoxin-reductase-like region; that stretch reads VGRIIGSLCV…AVEHRKSGSH (147 aa).

This sequence in the N-terminal section; belongs to the zinc metallo-hydrolase group 3 family. The protein in the C-terminal section; belongs to the flavodoxin reductase family. Fe cation serves as cofactor.

Mediates electron transfer from NADH to oxygen, reducing it to water. This modular protein has 3 redox cofactors, in other organisms the same activity requires 2 or 3 proteins. The chain is Putative diflavin flavoprotein A 4 (dfa4) from Nostoc sp. (strain PCC 7120 / SAG 25.82 / UTEX 2576).